The chain runs to 826 residues: Putative pentatricopeptide repeat-containing protein At1g13630 (826 aa).

PPR repeat units follow at residues 228–262 (NEHT…DIGP), 263–297 (SVVS…GLVP), 298–332 (SVYS…GVEP), 333–367 (DSVT…GLSP), 368–402 (DVIT…GFEL), 404–438 (SIIP…GLSP), 439–473 (DLVA…RILP), 474–508 (NSRT…GETL), 509–543 (DIVL…GITP), 544–578 (SVAT…GLAP), 579–613 (SVVS…GIPP), 614–648 (TNVT…KCKQ), 661–695 (DQIT…NLDA), 696–730 (SSAT…NVSL), 731–765 (SKFA…GFNV), and 766–800 (SIRD…GISP).

This sequence belongs to the PPR family. P subfamily.

The chain is Putative pentatricopeptide repeat-containing protein At1g13630 from Arabidopsis thaliana (Mouse-ear cress).